Reading from the N-terminus, the 269-residue chain is Formamidopyrimidine-DNA glycosylase (269 aa).

Catalysis depends on Pro-2, which acts as the Schiff-base intermediate with DNA. The active-site Proton donor is the Glu-3. Lys-57 acts as the Proton donor; for beta-elimination activity in catalysis. DNA-binding residues include His-90, Arg-109, and Arg-150. The FPG-type zinc finger occupies 235 to 269 (NVYGRKGEPCEACGKAIESKVIGQRNTFFCTRCQR). Residue Arg-259 is the Proton donor; for delta-elimination activity of the active site.

The protein belongs to the FPG family. Monomer. The cofactor is Zn(2+).

It carries out the reaction Hydrolysis of DNA containing ring-opened 7-methylguanine residues, releasing 2,6-diamino-4-hydroxy-5-(N-methyl)formamidopyrimidine.. The catalysed reaction is 2'-deoxyribonucleotide-(2'-deoxyribose 5'-phosphate)-2'-deoxyribonucleotide-DNA = a 3'-end 2'-deoxyribonucleotide-(2,3-dehydro-2,3-deoxyribose 5'-phosphate)-DNA + a 5'-end 5'-phospho-2'-deoxyribonucleoside-DNA + H(+). In terms of biological role, involved in base excision repair of DNA damaged by oxidation or by mutagenic agents. Acts as a DNA glycosylase that recognizes and removes damaged bases. Has a preference for oxidized purines, such as 7,8-dihydro-8-oxoguanine (8-oxoG). Has AP (apurinic/apyrimidinic) lyase activity and introduces nicks in the DNA strand. Cleaves the DNA backbone by beta-delta elimination to generate a single-strand break at the site of the removed base with both 3'- and 5'-phosphates. This Alteromonas mediterranea (strain DSM 17117 / CIP 110805 / LMG 28347 / Deep ecotype) protein is Formamidopyrimidine-DNA glycosylase.